A 338-amino-acid polypeptide reads, in one-letter code: Ketol-acid reductoisomerase (NADP(+)) (338 aa).

Positions Met-1–Thr-181 constitute a KARI N-terminal Rossmann domain. NADP(+)-binding positions include Tyr-24–Gln-27, Arg-47, Ser-50, Ser-52, and Asp-82–Gln-85. The active site involves His-107. Gly-133 provides a ligand contact to NADP(+). Positions Thr-182–Ile-327 constitute a KARI C-terminal knotted domain. Mg(2+) contacts are provided by Asp-190, Glu-194, Glu-226, and Glu-230. Ser-251 is a binding site for substrate.

This sequence belongs to the ketol-acid reductoisomerase family. It depends on Mg(2+) as a cofactor.

It catalyses the reaction (2R)-2,3-dihydroxy-3-methylbutanoate + NADP(+) = (2S)-2-acetolactate + NADPH + H(+). The catalysed reaction is (2R,3R)-2,3-dihydroxy-3-methylpentanoate + NADP(+) = (S)-2-ethyl-2-hydroxy-3-oxobutanoate + NADPH + H(+). It participates in amino-acid biosynthesis; L-isoleucine biosynthesis; L-isoleucine from 2-oxobutanoate: step 2/4. It functions in the pathway amino-acid biosynthesis; L-valine biosynthesis; L-valine from pyruvate: step 2/4. Involved in the biosynthesis of branched-chain amino acids (BCAA). Catalyzes an alkyl-migration followed by a ketol-acid reduction of (S)-2-acetolactate (S2AL) to yield (R)-2,3-dihydroxy-isovalerate. In the isomerase reaction, S2AL is rearranged via a Mg-dependent methyl migration to produce 3-hydroxy-3-methyl-2-ketobutyrate (HMKB). In the reductase reaction, this 2-ketoacid undergoes a metal-dependent reduction by NADPH to yield (R)-2,3-dihydroxy-isovalerate. This Thiobacillus denitrificans (strain ATCC 25259 / T1) protein is Ketol-acid reductoisomerase (NADP(+)).